A 232-amino-acid polypeptide reads, in one-letter code: Alpha N-terminal protein methyltransferase 1 (232 aa).

S-adenosyl-L-methionine-binding positions include Gly-71, Arg-76, 123–124, and Gln-139; that span reads MQ.

Belongs to the methyltransferase superfamily. NTM1 family.

Its subcellular location is the cytoplasm. The catalysed reaction is N-terminal L-alanyl-L-prolyl-L-lysyl-[protein] + 3 S-adenosyl-L-methionine = N-terminal N,N,N-trimethyl-L-alanyl-L-prolyl-L-lysyl-[protein] + 3 S-adenosyl-L-homocysteine + 3 H(+). It catalyses the reaction N-terminal L-seryl-L-prolyl-L-lysyl-[protein] + 3 S-adenosyl-L-methionine = N-terminal N,N,N-trimethyl-L-seryl-L-prolyl-L-lysyl-[protein] + 3 S-adenosyl-L-homocysteine + 3 H(+). It carries out the reaction N-terminal L-prolyl-L-prolyl-L-lysyl-[protein] + 2 S-adenosyl-L-methionine = N-terminal N,N-dimethyl-L-prolyl-L-prolyl-L-lysyl-[protein] + 2 S-adenosyl-L-homocysteine + 2 H(+). Alpha-N-methyltransferase that methylates the N-terminus of target proteins containing the N-terminal motif [Ala/Pro/Ser]-Pro-Lys when the initiator Met is cleaved. Specifically catalyzes mono-, di- or tri-methylation of exposed alpha-amino group of Ala or Ser residue in the [Ala/Ser]-Pro-Lys motif and mono- or di-methylation of Pro in the Pro-Pro-Lys motif. Responsible for the N-terminal methylation of the ribosomal proteins RPL12A, RPL12B, RPS25A and RPS25B. The polypeptide is Alpha N-terminal protein methyltransferase 1 (TAE1) (Saccharomyces cerevisiae (strain ATCC 204508 / S288c) (Baker's yeast)).